The chain runs to 124 residues: Small ribosomal subunit protein uS13 (124 aa).

The disordered stretch occupies residues 99–124 (RGQRTRTNARTRKGPRKTVGVMRKKS). Residues 101–124 (QRTRTNARTRKGPRKTVGVMRKKS) are compositionally biased toward basic residues.

It belongs to the universal ribosomal protein uS13 family. In terms of assembly, part of the 30S ribosomal subunit. Forms a loose heterodimer with protein S19. Forms two bridges to the 50S subunit in the 70S ribosome.

Located at the top of the head of the 30S subunit, it contacts several helices of the 16S rRNA. In the 70S ribosome it contacts the 23S rRNA (bridge B1a) and protein L5 of the 50S subunit (bridge B1b), connecting the 2 subunits; these bridges are implicated in subunit movement. Contacts the tRNAs in the A and P-sites. The polypeptide is Small ribosomal subunit protein uS13 (Caldicellulosiruptor saccharolyticus (strain ATCC 43494 / DSM 8903 / Tp8T 6331)).